Here is a 214-residue protein sequence, read N- to C-terminus: Peptide methionine sulfoxide reductase B1, chloroplastic (214 aa).

The transit peptide at 1–53 directs the protein to the chloroplast; that stretch reads MAMRQYAAATAASSSFRARPRARPSCLPAAALPLAPCCGVAWSRASYRRASVR. A compositionally biased stretch (low complexity) spans 58-81; it reads ASSSSSSSSSSPSPQGQAQAQAQG. The disordered stretch occupies residues 58–91; sequence ASSSSSSSSSSPSPQGQAQAQAQGKPNYSTSLTD. The MsrB domain occupies 91-213; that stretch reads DEEWRKRLTK…NSASLKLKKT (123 aa). Zn(2+) contacts are provided by cysteine 130, cysteine 133, cysteine 179, and cysteine 182. Residue cysteine 202 is the Nucleophile of the active site.

Belongs to the MsrB Met sulfoxide reductase family. Requires Zn(2+) as cofactor. In terms of tissue distribution, expressed in leaves and flowers.

It localises to the plastid. The protein resides in the chloroplast. It carries out the reaction L-methionyl-[protein] + [thioredoxin]-disulfide + H2O = L-methionyl-(R)-S-oxide-[protein] + [thioredoxin]-dithiol. Catalyzes the reduction of methionine sulfoxide (MetSO) to methionine in proteins. Involved in abiotic stress response. Plays a protective role against oxidative stress by restoring activity to proteins that have been inactivated by methionine oxidation. MSRB family specifically reduces the MetSO R-enantiomer. This Oryza sativa subsp. japonica (Rice) protein is Peptide methionine sulfoxide reductase B1, chloroplastic.